We begin with the raw amino-acid sequence, 569 residues long: MSFLGGSECAANANPLAQFFKQSQHDTSLEQSLRNSAHDTHQNAQIRAPVAMNEAERAHMEQFMNQSTPFNFQPMANELRMIQPDLQTQTTPALRGPRAQNPVPLQIPGQAQPQVSGWSSEFQNTATSQVTHSPSPVSQVRMRSMGMAPRLHLRPFSSANGPIQASSMTNSVMQEDTSQQVDWEQQFKEMEEMEEMEEATAAMQQPAEETVSAQESAFDQVWDNIQETYADNMLSNDEFQAQWEKDFEKYAQTRLNYGEYTFEENNQFRNNLDAYEIGIKLMESGAKLSEAALAFEAAVEQNPGHVDAWLRLGQVQTQNEKELAGIAALEKCLELSPQNLVALMTLAISYINEGYDNAAFATLERWIETKYPEVAERARNANPDIQADDRFSLNKRVTQLFIKAAQLSPEGANMDSEVQTGLGVLFYSMEEYSKTLDCFQAAIEHNPNDALAWNRLGASLANSNKPEQAIEAYSRTLQLNPNFVRARYNLGVSFINMGMYRDAVDHLLTGLSMHEVESLDGSSSVARSNQSTSLIETLKRAFLAMDRRDLIDKVKPGLNVESFRKTYDI.

A Glycyl cysteine thioester (Cys-Gly) (interchain with G-Cter in ubiquitin) cross-link involves residue C9. The segment at 10–32 (AANANPLAQFFKQSQHDTSLEQS) is amphipathic helix 1 (AH1). K21 participates in a covalent cross-link: Glycyl lysine isopeptide (Lys-Gly) (interchain with G-Cter in ubiquitin). A disordered region spans residues 23-42 (SQHDTSLEQSLRNSAHDTHQ). Positions 57 to 72 (RAHMEQFMNQSTPFNF) are amphipathic helix 2 (AH2). 2 consecutive short sequence motifs (wxxxF/Y motif) follow at residues 118 to 122 (WSSEF) and 183 to 187 (WEQQF). Residues 218–234 (FDQVWDNIQETYADNML) form an amphipathic helix 4 (AH4) region. The WxxxF/Y motif 3 signature appears at 243 to 247 (WEKDF). TPR repeat units lie at residues 272–305 (LDAY…NPGH), 306–339 (VDAW…SPQN), 340–377 (LVAL…VAER), 378–415 (ARNA…ANMD), 416–449 (SEVQ…NPND), 450–483 (ALAW…NPNF), and 484–517 (VRAR…HEVE).

It belongs to the peroxisomal targeting signal receptor family. As to quaternary structure, interacts (via WxxxF/Y and LVxEF motifs) with PEX14; promoting translocation through the PEX13-PEX14 docking complex. Monoubiquitinated at Cys-9 by PEX2 during PEX5 passage through the retrotranslocation channel: monoubiquitination acts as a signal for PEX5 extraction and is required for proper export from peroxisomes and recycling. When PEX5 recycling is compromised, polyubiquitinated at Lys-21 by PEX10 during its passage through the retrotranslocation channel, leading to its degradation.

The protein localises to the cytoplasm. Its subcellular location is the cytosol. The protein resides in the peroxisome matrix. In terms of biological role, receptor that mediates peroxisomal import of proteins containing a C-terminal PTS1-type tripeptide peroxisomal targeting signal (SKL-type). Binds to cargo proteins containing a PTS1 peroxisomal targeting signal in the cytosol, and translocates them into the peroxisome matrix by passing through the PEX13-PEX14 docking complex along with cargo proteins. PEX5 receptor is then retrotranslocated into the cytosol, leading to release of bound cargo in the peroxisome matrix, and reset for a subsequent peroxisome import cycle. This Pichia angusta (Yeast) protein is Peroxisomal targeting signal receptor (PEX5).